The following is a 1557-amino-acid chain: Ras guanine nucleotide exchange factor K (1557 aa).

The span at 1-16 (MEPTINPPVNLPPPVP) shows a compositional bias: pro residues. Disordered stretches follow at residues 1–121 (MEPT…SYTV), 146–181 (VETL…KLSV), 195–238 (LYQQ…SPQL), 283–347 (SPLP…GLTP), 558–619 (NNNN…DELS), and 881–937 (TNNN…QVNH). Low complexity-rich tracts occupy residues 17–40 (SRSN…NNTN), 52–63 (SSPSSPSSPSPS), 73–90 (NNNN…NGNV), 102–114 (ISSP…HTSS), 148–161 (TLSS…KTTT), 195–207 (LYQQ…NPNS), and 222–236 (PPSS…STSP). Over residues 283–310 (SPLPPPPLTIPNKVPPLPMRLPPPPPPQ) the composition is skewed to pro residues. Coiled-coil stretches lie at residues 310–338 (QQLD…SNST) and 591–629 (NNNN…EEEL). Residues 311 to 333 (QLDQMYSNNNQQQQQQQQQQQNN) show a composition bias toward low complexity. A compositionally biased stretch (polar residues) spans 334–343 (ESNSTTTSEG). Low complexity-rich tracts occupy residues 558–610 (NNNN…NNNN) and 881–928 (TNNN…TPTT). Residues 1058–1177 (LNAEIDAATL…QIRNCILKRT (120 aa)) enclose the N-terminal Ras-GEF domain. The disordered stretch occupies residues 1254 to 1303 (PSISQNTPSSPSLIPSSPRPITSSSSVSSSTLLKSPLSQQAKSRIPETKT). A compositionally biased stretch (low complexity) spans 1261–1291 (PSSPSLIPSSPRPITSSSSVSSSTLLKSPLS). Residues 1316 to 1549 (DDEEIARQLT…YHLSLLKEPR (234 aa)) enclose the Ras-GEF domain.

In terms of biological role, promotes the exchange of Ras-bound GDP by GTP. The sequence is that of Ras guanine nucleotide exchange factor K (gefK) from Dictyostelium discoideum (Social amoeba).